A 210-amino-acid polypeptide reads, in one-letter code: Transcriptional regulator DauR (210 aa).

This sequence belongs to the DauR family.

In terms of biological role, dauR represses the dauBAR operon. The chain is Transcriptional regulator DauR from Pseudomonas aeruginosa (strain ATCC 15692 / DSM 22644 / CIP 104116 / JCM 14847 / LMG 12228 / 1C / PRS 101 / PAO1).